Consider the following 177-residue polypeptide: Large ribosomal subunit protein uL10 (177 aa).

Belongs to the universal ribosomal protein uL10 family. As to quaternary structure, part of the ribosomal stalk of the 50S ribosomal subunit. The N-terminus interacts with L11 and the large rRNA to form the base of the stalk. The C-terminus forms an elongated spine to which L12 dimers bind in a sequential fashion forming a multimeric L10(L12)X complex.

Forms part of the ribosomal stalk, playing a central role in the interaction of the ribosome with GTP-bound translation factors. This is Large ribosomal subunit protein uL10 from Thermoanaerobacter pseudethanolicus (strain ATCC 33223 / 39E) (Clostridium thermohydrosulfuricum).